We begin with the raw amino-acid sequence, 251 residues long: tRNA (guanine-N(1)-)-methyltransferase (251 aa).

Residues Gly-111 and 131-136 (LGDFVL) contribute to the S-adenosyl-L-methionine site.

Belongs to the RNA methyltransferase TrmD family. As to quaternary structure, homodimer.

The protein localises to the cytoplasm. The catalysed reaction is guanosine(37) in tRNA + S-adenosyl-L-methionine = N(1)-methylguanosine(37) in tRNA + S-adenosyl-L-homocysteine + H(+). Specifically methylates guanosine-37 in various tRNAs. The chain is tRNA (guanine-N(1)-)-methyltransferase from Synechococcus sp. (strain JA-2-3B'a(2-13)) (Cyanobacteria bacterium Yellowstone B-Prime).